We begin with the raw amino-acid sequence, 123 residues long: Ferredoxin-5 (123 aa).

In terms of domain architecture, 2Fe-2S ferredoxin-type spans 2–119; that stretch reads PNITFTSPIM…DVMVHFTGTP (118 aa). Residues Cys42, Cys47, Cys50, and Cys102 each coordinate [2Fe-2S] cluster.

The protein belongs to the 2Fe2S plant-type ferredoxin family. It depends on [2Fe-2S] cluster as a cofactor.

In terms of biological role, ferredoxins are iron-sulfur proteins that transfer electrons in a wide variety of metabolic reactions. This ferredoxin probably participates in nitrogen fixation. The polypeptide is Ferredoxin-5 (fdxD) (Rhodobacter capsulatus (Rhodopseudomonas capsulata)).